A 194-amino-acid polypeptide reads, in one-letter code: Pyridoxal 5'-phosphate synthase subunit PdxT (194 aa).

50–52 (GES) lines the L-glutamine pocket. The active-site Nucleophile is C82. L-glutamine is bound by residues R109 and 136-137 (IR). Catalysis depends on charge relay system residues H172 and E174.

The protein belongs to the glutaminase PdxT/SNO family. In terms of assembly, in the presence of PdxS, forms a dodecamer of heterodimers. Only shows activity in the heterodimer.

It carries out the reaction aldehydo-D-ribose 5-phosphate + D-glyceraldehyde 3-phosphate + L-glutamine = pyridoxal 5'-phosphate + L-glutamate + phosphate + 3 H2O + H(+). The catalysed reaction is L-glutamine + H2O = L-glutamate + NH4(+). It functions in the pathway cofactor biosynthesis; pyridoxal 5'-phosphate biosynthesis. Functionally, catalyzes the hydrolysis of glutamine to glutamate and ammonia as part of the biosynthesis of pyridoxal 5'-phosphate. The resulting ammonia molecule is channeled to the active site of PdxS. The sequence is that of Pyridoxal 5'-phosphate synthase subunit PdxT from Streptococcus pneumoniae (strain CGSP14).